A 72-amino-acid polypeptide reads, in one-letter code: Cytotoxin 9 (72 aa).

An N-terminal signal peptide occupies residues 1–12; sequence VVTIVCLDLGYT. Cystine bridges form between cysteine 15/cysteine 33, cysteine 26/cysteine 50, cysteine 54/cysteine 65, and cysteine 66/cysteine 71.

This sequence belongs to the three-finger toxin family. Short-chain subfamily. Type IA cytotoxin sub-subfamily. As to quaternary structure, monomer in solution; Homodimer and oligomer in the presence of negatively charged lipids forming a pore with a size ranging between 20 and 30 Angstroms. In terms of tissue distribution, expressed by the venom gland.

It localises to the secreted. Shows cytolytic activity on many different cells by forming a pore in lipid membranes. In vivo, increases heart rate or kills the animal by cardiac arrest. In addition, it binds to heparin with high affinity, interacts with Kv channel-interacting protein 1 (KCNIP1) in a calcium-independent manner, and binds to integrin alpha-V/beta-3 (ITGAV/ITGB3) with moderate affinity. Preferentially binds acidic phospholipids like phosphatidylserine, phosphatidic acid and phosphatidyl glycerol. Has hemolytic activity towards human erythrocytes (EC(50)=0.171 uM) and cytolytic activity towards various cell lines. The polypeptide is Cytotoxin 9 (Naja naja (Indian cobra)).